We begin with the raw amino-acid sequence, 317 residues long: Small ribosomal subunit protein uS2 (317 aa).

The residue at position 2 (serine 2) is an N-acetylserine. Laminin-binding regions lie at residues 161–180 (IPCN…MLAR) and 205–229 (RDPE…EFQG). 5 [DE]-W-[ST] repeats span residues 230-232 (EWS), 245-247 (DWS), 288-290 (DWS), 297-299 (DWS), and 315-317 (EWS). Residues 242 to 317 (EVPDWSEGVQ…DWGGSTAEWS (76 aa)) form a laminin-binding region. A disordered region spans residues 278 to 317 (PGPTTEGYSEDWSAQPATEDWSAAPTAQAGDWGGSTAEWS).

The protein belongs to the universal ribosomal protein uS2 family. Monomer (37LRP) and homodimer (67LR). Component of the small ribosomal subunit. Mature ribosomes consist of a small (40S) and a large (60S) subunit. The 40S subunit contains about 33 different proteins and 1 molecule of RNA (18S). The 60S subunit contains about 49 different proteins and 3 molecules of RNA (28S, 5.8S and 5S). Interacts with rps21. Interacts with several laminins including at least lamb1. Interacts with mdk. Acylated. Acylation may be a prerequisite for conversion of the monomeric 37 kDa laminin receptor precursor (37LRP) to the mature dimeric 67 kDa laminin receptor (67LR), and may provide a mechanism for membrane association. Post-translationally, cleaved by stromelysin-3 (ST3) at the cell surface. Cleavage by stromelysin-3 may be a mechanism to alter cell-extracellular matrix interactions.

The protein localises to the cell membrane. It is found in the cytoplasm. It localises to the nucleus. Functionally, required for the assembly and/or stability of the 40S ribosomal subunit. Required for the processing of the 20S rRNA-precursor to mature 18S rRNA in a late step of the maturation of 40S ribosomal subunits. Also functions as a cell surface receptor for laminin. Plays a role in cell adhesion to the basement membrane and in the consequent activation of signaling transduction pathways. May play a role in cell fate determination and tissue morphogenesis. This is Small ribosomal subunit protein uS2 (rpsa) from Ictalurus punctatus (Channel catfish).